A 31-amino-acid polypeptide reads, in one-letter code: Maltose/maltodextrin import ATP-binding protein MalK (31 aa).

This sequence belongs to the ABC transporter superfamily. Maltooligosaccharide importer (TC 3.A.1.1.1) family. The complex is composed of two ATP-binding proteins (MalK), two transmembrane proteins (MalG and MalK) and a solute-binding protein (MalE).

It is found in the cell inner membrane. It catalyses the reaction D-maltose(out) + ATP + H2O = D-maltose(in) + ADP + phosphate + H(+). Functionally, part of the ABC transporter complex MalEFGK involved in maltose/maltodextrin import. Responsible for energy coupling to the transport system. The sequence is that of Maltose/maltodextrin import ATP-binding protein MalK from Photorhabdus luminescens (Xenorhabdus luminescens).